A 409-amino-acid chain; its full sequence is Adenosine receptor A2a (409 aa).

At 1–4 the chain is on the extracellular side; it reads MSSS. Residues 5–29 form a helical membrane-spanning segment; it reads VYITVELVIAVLAILGNVLVCWAVW. Residues 30-39 are Cytoplasmic-facing; it reads INSNLQNVTN. The chain crosses the membrane as a helical span at residues 40-63; it reads YFVVSLAAADIAVGVLAIPFAITI. The Extracellular segment spans residues 64–74; it reads STGFCAACHGC. Disulfide bonds link Cys-68–Cys-156, Cys-71–Cys-143, and Cys-74–Cys-163. The chain crosses the membrane as a helical span at residues 75–97; it reads LFFACFVLVLTQSSIFSLLTITI. Residues 98–117 lie on the Cytoplasmic side of the membrane; that stretch reads DRYIAIRIPLRYNGLVTCTR. A helical transmembrane segment spans residues 118–140; it reads AKGIIAICWVLSFAIGLTPMLGW. Residues 141–170 lie on the Extracellular side of the membrane; the sequence is NNCSQPKGDKNHSESCDEGQVTCLFEDVVP. 2 N-linked (GlcNAc...) asparagine glycosylation sites follow: Asn-142 and Asn-151. Glu-166 contacts adenosine. Residues 171 to 195 form a helical membrane-spanning segment; the sequence is MNYMVYYNFFAFVLVPLLLMLGIYL. The Cytoplasmic portion of the chain corresponds to 196-231; sequence RIFLAARRQLKQMESQPLPGERTRSTLQKEVHPAKS. A helical membrane pass occupies residues 232-255; that stretch reads LAIIVGLFALCCLPLNIINCFTFF. Asn-250 is a binding site for adenosine. Cys-256 and Cys-259 form a disulfide bridge. Residues 256-263 are Extracellular-facing; sequence CPECDHAP. The helical transmembrane segment at 264–287 threads the bilayer; that stretch reads PWLMYLTIILSHGNSVVNPLIYAY. Residues Ser-274 and His-275 each contribute to the adenosine site. Residues 288 to 409 are Cytoplasmic-facing; sequence RIREFRQTFR…PPAHGGAGVS (122 aa). Disordered stretches follow at residues 316 to 336 and 369 to 409; these read TSAR…LRLN and QRSH…AGVS.

Belongs to the G-protein coupled receptor 1 family. As to quaternary structure, interacts (via cytoplasmic C-terminal domain) with USP4; the interaction is direct. May interact with DRD4. Interacts with NECAB2. Interacts (via cytoplasmic C-terminal domain) with GAS2L2; interaction enhances receptor-mediated adenylyl cyclase activity. Ubiquitinated. Deubiquitinated by USP4; leading to stabilization and expression at the cell surface.

It is found in the cell membrane. Receptor for adenosine. The activity of this receptor is mediated by G proteins which activate adenylyl cyclase. This chain is Adenosine receptor A2a (ADORA2A), found in Cavia porcellus (Guinea pig).